The following is a 465-amino-acid chain: Putative multidrug resistance protein MdtD (465 aa).

Helical transmembrane passes span 12-32, 49-69, 72-92, 138-158, 165-185, 195-215, 219-239, 267-287, 290-310, 329-351, 393-413, and 430-450; these read LWIVAFGFFMQTLDTTIVNTA, SVIVSYVLTVAVMLPASGWLA, IGVKWVFFSAIILFTFGSLMC, FVTLPGQIGPLVGPALGGFLV, WIFLINLPVGVIGALATLLLM, FDISGFIMLAIGMATLTLALD, GLGLSPLAIAGLILCGVIALG, LVGSMSARIGSGMLPFMTPIF, IGLGFSPFHAGLMMIPMIIGS, VLVNATLLLAVVSLSLPLVAIMG, LLSMAMQLSMSIGVSTAGILL, and SAFLYSYLCMAIIIALPALIF.

Belongs to the major facilitator superfamily. TCR/Tet family.

It localises to the cell inner membrane. The chain is Putative multidrug resistance protein MdtD from Yersinia pseudotuberculosis serotype I (strain IP32953).